A 621-amino-acid polypeptide reads, in one-letter code: NADPH-dependent diflavin oxidoreductase 1 (621 aa).

Positions 6-168 (IAVLYGSETG…VYFEFEKRII (163 aa)) constitute a Flavodoxin-like domain. FMN is bound by residues 12–17 (SETGNA), 59–62 (STTG), 106–115 (LGDSSYPKFN), and Glu142. Residues 224–489 (KLIKTGTITL…VGPGVGLAPL (266 aa)) enclose the FAD-binding FR-type domain. FAD is bound by residues Arg381, 411 to 414 (RLYS), and 443 to 446 (GVCT). NADP(+)-binding positions include 536–537 (SR) and 545–549 (TKYVQ). FAD is bound at residue Trp621.

The protein belongs to the NADPH-dependent diflavin oxidoreductase NDOR1 family. This sequence in the N-terminal section; belongs to the flavodoxin family. In the C-terminal section; belongs to the flavoprotein pyridine nucleotide cytochrome reductase family. As to quaternary structure, interacts with DRE2; as part of the cytosolic iron-sulfur (Fe-S) protein assembly (CIA) machinery. The cofactor is FAD. FMN serves as cofactor.

It is found in the cytoplasm. It localises to the mitochondrion. It catalyses the reaction 2 oxidized [2Fe-2S]-[protein] + NADPH = 2 reduced [2Fe-2S]-[protein] + NADP(+) + H(+). Its function is as follows. NADPH-dependent reductase which is a central component of the cytosolic iron-sulfur (Fe-S) protein assembly (CIA) machinery. Transfers electrons from NADPH via its FAD and FMN prosthetic groups to the [2Fe-2S] cluster of DRE2, another key component of the CIA machinery. In turn, this reduced cluster provides electrons for assembly of cytosolic iron-sulfur cluster proteins. Positively controls H(2)O(2)-induced cell death. The protein is NADPH-dependent diflavin oxidoreductase 1 of Candida glabrata (strain ATCC 2001 / BCRC 20586 / JCM 3761 / NBRC 0622 / NRRL Y-65 / CBS 138) (Yeast).